A 160-amino-acid chain; its full sequence is Transcription antitermination protein NusB (160 aa).

Belongs to the NusB family.

In terms of biological role, involved in transcription antitermination. Required for transcription of ribosomal RNA (rRNA) genes. Binds specifically to the boxA antiterminator sequence of the ribosomal RNA (rrn) operons. The protein is Transcription antitermination protein NusB of Sinorhizobium fredii (strain NBRC 101917 / NGR234).